Consider the following 445-residue polypeptide: UPF0761 membrane protein Mlg_0521 (445 aa).

6 consecutive transmembrane segments (helical) span residues 56–76 (LLALVPLLTIGLSIFAAFPVF), 112–132 (GLTVVGLLALMVSALLMMAAI), 152–172 (FMVYWTVLTLAPILMGASLGI), 195–215 (LLAGMPFVAETVAFTFLYAAV), 225–245 (ALLGGLLAAALFEAAKGGFGW), and 259–279 (ALAALPIFLIWLYLSWVVVLV).

It belongs to the UPF0761 family.

The protein resides in the cell inner membrane. This chain is UPF0761 membrane protein Mlg_0521, found in Alkalilimnicola ehrlichii (strain ATCC BAA-1101 / DSM 17681 / MLHE-1).